The chain runs to 308 residues: Ribonuclease Z (308 aa).

The Zn(2+) site is built by histidine 63, histidine 65, aspartate 67, histidine 68, histidine 140, aspartate 211, and histidine 269. Aspartate 67 (proton acceptor) is an active-site residue.

Belongs to the RNase Z family. In terms of assembly, homodimer. The cofactor is Zn(2+).

It catalyses the reaction Endonucleolytic cleavage of RNA, removing extra 3' nucleotides from tRNA precursor, generating 3' termini of tRNAs. A 3'-hydroxy group is left at the tRNA terminus and a 5'-phosphoryl group is left at the trailer molecule.. Zinc phosphodiesterase, which displays some tRNA 3'-processing endonuclease activity. Probably involved in tRNA maturation, by removing a 3'-trailer from precursor tRNA. The sequence is that of Ribonuclease Z from Bacillus velezensis (strain DSM 23117 / BGSC 10A6 / LMG 26770 / FZB42) (Bacillus amyloliquefaciens subsp. plantarum).